The chain runs to 257 residues: Imidazole glycerol phosphate synthase subunit HisF (257 aa).

Residues Asp-11 and Asp-130 contribute to the active site.

The protein belongs to the HisA/HisF family. As to quaternary structure, heterodimer of HisH and HisF.

The protein localises to the cytoplasm. It carries out the reaction 5-[(5-phospho-1-deoxy-D-ribulos-1-ylimino)methylamino]-1-(5-phospho-beta-D-ribosyl)imidazole-4-carboxamide + L-glutamine = D-erythro-1-(imidazol-4-yl)glycerol 3-phosphate + 5-amino-1-(5-phospho-beta-D-ribosyl)imidazole-4-carboxamide + L-glutamate + H(+). It participates in amino-acid biosynthesis; L-histidine biosynthesis; L-histidine from 5-phospho-alpha-D-ribose 1-diphosphate: step 5/9. Functionally, IGPS catalyzes the conversion of PRFAR and glutamine to IGP, AICAR and glutamate. The HisF subunit catalyzes the cyclization activity that produces IGP and AICAR from PRFAR using the ammonia provided by the HisH subunit. The chain is Imidazole glycerol phosphate synthase subunit HisF from Pseudoalteromonas translucida (strain TAC 125).